Consider the following 176-residue polypeptide: Ribosome rescue factor SmrB (176 aa).

The Smr domain occupies 93–168 (LDLHGYRQSE…GDAALLVLID (76 aa)).

It belongs to the SmrB family. Associates with collided ribosomes, but not with correctly translating polysomes.

Its function is as follows. Acts as a ribosome collision sensor. Detects stalled/collided disomes (pairs of ribosomes where the leading ribosome is stalled and a second ribosome has collided with it) and endonucleolytically cleaves mRNA at the 5' boundary of the stalled ribosome. Stalled/collided disomes form a new interface (primarily via the 30S subunits) that binds SmrB. Cleaved mRNA becomes available for tmRNA ligation, leading to ribosomal subunit dissociation and rescue of stalled ribosomes. The sequence is that of Ribosome rescue factor SmrB from Shewanella oneidensis (strain ATCC 700550 / JCM 31522 / CIP 106686 / LMG 19005 / NCIMB 14063 / MR-1).